Here is a 547-residue protein sequence, read N- to C-terminus: Ganoderic acid synthetase CYP5150L8 (547 aa).

A helical transmembrane segment spans residues 2–22 (PDSSLVLVAIAGAAYIFWLVF). Cysteine 487 provides a ligand contact to heme.

This sequence belongs to the cytochrome P450 family. Heme serves as cofactor.

The protein localises to the membrane. The enzyme catalyses lanosterol + reduced [NADPH--hemoprotein reductase] + O2 = 26-hydroxylanosterol + oxidized [NADPH--hemoprotein reductase] + H2O + H(+). It carries out the reaction 26-hydroxylanosterol + reduced [NADPH--hemoprotein reductase] + O2 = 26-oxolanosterol + oxidized [NADPH--hemoprotein reductase] + 2 H2O + H(+). It catalyses the reaction 26-oxolanosterol + reduced [NADPH--hemoprotein reductase] + O2 = 3beta-hydroxy-lanosta-8, 24-dien-26-oate + oxidized [NADPH--hemoprotein reductase] + H2O + 2 H(+). The protein operates within secondary metabolite biosynthesis; terpenoid biosynthesis. Its function is as follows. Cytochrome P450 monooxygenase that is involved in the biosynthesis of ganoderic acids (GA), a group of highly oxygenated lanostane-type triterpenoids which well recognized as a main group of unique bioactive compounds in the medicinal mushroom Ganoderma lucidum. CYP5150L8 alone is able to catalyze the three-step oxidations at C-26 from lanosterol to 3-hydroxy-lanosta-8,24-dien-26-oic acid (also called ganoderic acid Z or HLDOA). The methyl group of lanosterol at C-26 is first oxidized into hydroxyl group to form 3-hydroxy-lanosta-8,24-dien-26-ol (HLDO). The hydroxyl group at C-26 of HLDO is further converted into a formyl group to form 3-hydroxy-lanosta-8,24-dien-26-al (HLDA). Finally, the formyl group is oxidized into a carboxyl group to produce 3-hydroxy-lanosta-8,24-dien-26-oic acid (HLDOA). In Ganoderma lucidum (Ling zhi medicinal fungus), this protein is Ganoderic acid synthetase CYP5150L8.